The primary structure comprises 298 residues: Ribose-phosphate pyrophosphokinase (298 aa).

ATP is bound by residues Asp33–Glu35 and Arg91–Gln92. Mg(2+)-binding residues include His125 and Asp164. The active site involves Lys187. 2 residues coordinate D-ribose 5-phosphate: Arg189 and Asp224.

It belongs to the ribose-phosphate pyrophosphokinase family. Class III (archaeal) subfamily. The cofactor is Mg(2+).

The protein localises to the cytoplasm. The catalysed reaction is D-ribose 5-phosphate + ATP = 5-phospho-alpha-D-ribose 1-diphosphate + AMP + H(+). It functions in the pathway metabolic intermediate biosynthesis; 5-phospho-alpha-D-ribose 1-diphosphate biosynthesis; 5-phospho-alpha-D-ribose 1-diphosphate from D-ribose 5-phosphate (route I): step 1/1. Involved in the biosynthesis of the central metabolite phospho-alpha-D-ribosyl-1-pyrophosphate (PRPP) via the transfer of pyrophosphoryl group from ATP to 1-hydroxyl of ribose-5-phosphate (Rib-5-P). This is Ribose-phosphate pyrophosphokinase from Methanobrevibacter smithii (strain ATCC 35061 / DSM 861 / OCM 144 / PS).